The chain runs to 480 residues: Zinc metalloproteinase/disintegrin (480 aa).

Residues 1 to 20 (MIQVLLITICLAVFPFQGSS) form the signal peptide. Residues 21–190 (IVLDSGNLNE…KASQLNVSPD (170 aa)) constitute a propeptide that is removed on maturation. The Peptidase M12B domain occupies 197 to 391 (RFIKLAIYVD…HSPQCILNDP (195 aa)). Asn259 and Asn279 each carry an N-linked (GlcNAc...) asparagine glycan. 9 disulfide bridges follow: Cys308–Cys386, Cys348–Cys370, Cys350–Cys353, Cys413–Cys428, Cys415–Cys423, Cys422–Cys445, Cys436–Cys442, Cys441–Cys466, and Cys454–Cys473. His333 is a Zn(2+) binding site. Residue Glu334 is part of the active site. Positions 337 and 343 each coordinate Zn(2+). In terms of domain architecture, Disintegrin spans 399–480 (TPVSGNELLE…AGCPRNPFHA (82 aa)). The Cell attachment site signature appears at 458 to 460 (RGD).

Belongs to the venom metalloproteinase (M12B) family. P-II subfamily. P-IIa sub-subfamily. In terms of assembly, monomer. Zn(2+) is required as a cofactor. Expressed by the venom gland.

Its subcellular location is the secreted. Its function is as follows. Impairs hemostasis in the envenomed animal. In terms of biological role, inhibits platelet aggregation and bone resorption. The chain is Zinc metalloproteinase/disintegrin from Gloydius halys (Chinese water mocassin).